Consider the following 702-residue polypeptide: Epsin-1 (702 aa).

One can recognise an ENTH domain in the interval 10-142 (NFSKGYTDTQ…EDEHALKEAR (133 aa)). Basic and acidic residues-rich tracts occupy residues 136-160 (HALK…SSRF) and 183-192 (SRYDDDDRDH). The tract at residues 136–285 (HALKEARGDS…HQREREQQEQ (150 aa)) is disordered. Basic residues predominate over residues 193–214 (RSRRRSRSRRPGRSRSRRRSRR). Phosphoserine is present on residues S212, S216, S218, and S223. 2 consecutive UIM domains span residues 226–245 (ENDP…AEED) and 254–273 (DSEA…DEAR). Residues 230–248 (ELQRVIEESKRQAEEDAKR) show a composition bias toward basic and acidic residues. S255 bears the Phosphoserine mark. Positions 266-283 (SKEEDEARQRHQREREQQ) are enriched in basic and acidic residues. Phosphothreonine is present on T406. 2 disordered regions span residues 504–589 (NHTG…RTGD) and 683–702 (PMQG…LIDL). The segment covering 514-534 (TGLQRQTTGYTGNNNPYSRPL) has biased composition (polar residues). Residues 535 to 549 (QSQSTGILQQQQQQS) are compositionally biased toward low complexity. The segment covering 557–577 (KTGSNNPFAQFSNLPSQSTAP) has biased composition (polar residues). Residues 683 to 695 (PMQGMQQQSMQPQ) are compositionally biased toward low complexity.

This sequence belongs to the epsin family.

The protein resides in the cytoplasm. It localises to the membrane. Functionally, binds to membranes enriched in phosphatidylinositol 3,5-bisphosphate (PtdIns(3,5)P2) and phosphatidylinositol 4,5-bisphosphate (PtdIns(4,5)P2). Required for endocytosis and localization of actin. This Schizosaccharomyces pombe (strain 972 / ATCC 24843) (Fission yeast) protein is Epsin-1 (ent1).